A 272-amino-acid chain; its full sequence is Cytochrome c1 (272 aa).

Residues 1–24 (MTTIVKRALVAAGMVLAIGGAAQA) form the signal peptide. Heme c is bound by residues Cys-61, Cys-64, His-65, and Met-200. A helical membrane pass occupies residues 244 to 261 (LGLKVLLFLGVLTAMLLA).

The main subunits of complex b-c1 are: cytochrome b, cytochrome c1 and the Rieske protein. Binds 1 heme c group covalently per subunit.

Its subcellular location is the cell membrane. Functionally, component of the ubiquinol-cytochrome c reductase complex (complex III or cytochrome b-c1 complex), which is a respiratory chain that generates an electrochemical potential coupled to ATP synthesis. In Rhodospirillum rubrum, this protein is Cytochrome c1 (petC).